Reading from the N-terminus, the 448-residue chain is MSSAETMKQPTAASPDQFSVSHLLSAVESEISAGSEKGDPTERDLKITLEEKPLWDKFNALTNEMIVTKNGRRMFPVLKVNVSGLDPNAMYSFLLDFTAADNHRWKYVNGEWVPGGKPEPSVPSCVYIHPDSPNFGAHWMKSPVSFSKVKLTNKLNGGGQIMLNSLHKYEPRLHIIKVGGPDNQRMVSTHTFPETQFIAVTAYQNEEITALKIKYNPFAKAFLDAKERSDGKDGMEDLQDQPQYSQLGGWFLPGTGPICPPPNPHQFAPSLGLPSHGCDRYSTLRNHRSAPYPHPYQRSSPPTNYGHDTAASLPMMPTHDNWSGLPVSTHNMLSMSAMPHTTTSTHAQYPNLWSVSNNNLTPTTHAQTHMSGTMGTGLPHQFLRTTAPAPYHSIPTCTVPTTASSSPVYHDSHEVSSTDSGYGHSTTPPAPQTRITSNNWSPMTPPSL.

Residues 54 to 224 constitute a DNA-binding region (T-box); sequence LWDKFNALTN…YNPFAKAFLD (171 aa). Disordered stretches follow at residues 290–312 and 401–448; these read APYPHPYQRSSPPTNYGHDTAAS and TTAS…PPSL. Residues 417–442 show a composition bias toward polar residues; that stretch reads STDSGYGHSTTPPAPQTRITSNNWSP.

It is found in the nucleus. In terms of biological role, involved in the transcriptional regulation of genes required for mesoderm formation and differentiation. The chain is T-box transcription factor T homolog 1 from Branchiostoma floridae (Florida lancelet).